We begin with the raw amino-acid sequence, 439 residues long: Glucose-1-phosphate adenylyltransferase (439 aa).

Residues Tyr-116, Gly-182, 197-198 (EK), and Ser-215 each bind alpha-D-glucose 1-phosphate.

It belongs to the bacterial/plant glucose-1-phosphate adenylyltransferase family. In terms of assembly, homotetramer.

It catalyses the reaction alpha-D-glucose 1-phosphate + ATP + H(+) = ADP-alpha-D-glucose + diphosphate. Its pathway is glycan biosynthesis; glycogen biosynthesis. Involved in the biosynthesis of ADP-glucose, a building block required for the elongation reactions to produce glycogen. Catalyzes the reaction between ATP and alpha-D-glucose 1-phosphate (G1P) to produce pyrophosphate and ADP-Glc. The protein is Glucose-1-phosphate adenylyltransferase of Pasteurella multocida (strain Pm70).